Here is a 404-residue protein sequence, read N- to C-terminus: Keratin, type I microfibrillar, 47.6 kDa (404 aa).

The interval 1–56 is head; that stretch reads MSFNFCLPNLSFRSSCSSRPCVPSSCCGTTLPGACNIPASVGSCNWFCEGSFNGNE. In terms of domain architecture, IF rod spans 56–367; that stretch reads EKETMQFLND…GLLDSEDCKL (312 aa). The tract at residues 57 to 91 is coil 1A; it reads KETMQFLNDRLASYLEKVRQLERENAELERRILER. A linker 1 region spans residues 92–102; that stretch reads SQQQEPLVCPN. The segment at 103 to 203 is coil 1B; sequence YQSYFRTIEE…HEQEVNTLRS (101 aa). Positions 204 to 219 are linker 12; the sequence is QLGDRLNVEVDAAPTV. Positions 220–363 are coil 2; it reads DLNHVLNETR…NTYRGLLDSE (144 aa). The interval 364–404 is tail; sequence DCKLPCNPCATTNTCGKPIGPCISNPCVSRTRCGPCNTFVH.

This sequence belongs to the intermediate filament family.

Wool microfibrillar keratin. The sequence is that of Keratin, type I microfibrillar, 47.6 kDa from Ovis aries (Sheep).